The chain runs to 277 residues: Large ribosomal subunit protein uL2 (277 aa).

The segment at 219–277 is disordered; the sequence is RPQTRGSAMNPVDHPHGGGEGKKNSGRHPVTPWGKPTKGAKTRRKKASDKLIISRRKGK. Over residues 231 to 241 the composition is skewed to basic and acidic residues; it reads DHPHGGGEGKK. The segment covering 256–277 has biased composition (basic residues); it reads KGAKTRRKKASDKLIISRRKGK.

Belongs to the universal ribosomal protein uL2 family. As to quaternary structure, part of the 50S ribosomal subunit. Forms a bridge to the 30S subunit in the 70S ribosome.

In terms of biological role, one of the primary rRNA binding proteins. Required for association of the 30S and 50S subunits to form the 70S ribosome, for tRNA binding and peptide bond formation. It has been suggested to have peptidyltransferase activity; this is somewhat controversial. Makes several contacts with the 16S rRNA in the 70S ribosome. In Campylobacter concisus (strain 13826), this protein is Large ribosomal subunit protein uL2.